Here is a 366-residue protein sequence, read N- to C-terminus: MPGNTFGHSFRITTWGESHGRALGVVIDGVPAGLPLDTEIVQKELDRRRPGQSAVSTPRSETDKVEIISGIFEGKTTGTPISMMVWNKDADSSSYDNIKDLPRPGHADYPYMEKYGIRDHRGGGRSSARETIGRVAAGAVAKEILSIFGIDIIAHVTELGGIRAKEMPFDTIKEHLEKTPVRCADLEAAQLMLEKVGKAREEHESIGGVVEIIAIGLPPGIGEPVFDKLDADIAKAIMSIGAVKGVEIGIGNEAAQMKGSQMNDPFILEDGKIIAQTNNAGGILGGLSTGMPIICRASVKPTPSISKVQHTVNTKEMKNSDIIIKGRHDPTIPPRMVPVAEAMMALVLVDHMIRSGHIHPNSLLKQ.

R48 is an NADP(+) binding site. FMN is bound by residues 125–127, G285, 300–304, and R327; these read RSS and KPTPS.

This sequence belongs to the chorismate synthase family. FMNH2 is required as a cofactor.

It carries out the reaction 5-O-(1-carboxyvinyl)-3-phosphoshikimate = chorismate + phosphate. The protein operates within metabolic intermediate biosynthesis; chorismate biosynthesis; chorismate from D-erythrose 4-phosphate and phosphoenolpyruvate: step 7/7. Catalyzes the anti-1,4-elimination of the C-3 phosphate and the C-6 proR hydrogen from 5-enolpyruvylshikimate-3-phosphate (EPSP) to yield chorismate, which is the branch point compound that serves as the starting substrate for the three terminal pathways of aromatic amino acid biosynthesis. This reaction introduces a second double bond into the aromatic ring system. The sequence is that of Chorismate synthase from Methanococcoides burtonii (strain DSM 6242 / NBRC 107633 / OCM 468 / ACE-M).